The chain runs to 191 residues: Ribosomal RNA small subunit methyltransferase G (191 aa).

S-adenosyl-L-methionine-binding positions include Gly62, Phe67, 111 to 112 (IE), and Arg124.

This sequence belongs to the methyltransferase superfamily. RNA methyltransferase RsmG family.

Its subcellular location is the cytoplasm. It catalyses the reaction guanosine(527) in 16S rRNA + S-adenosyl-L-methionine = N(7)-methylguanosine(527) in 16S rRNA + S-adenosyl-L-homocysteine. In terms of biological role, specifically methylates the N7 position of guanine in position 527 of 16S rRNA. The sequence is that of Ribosomal RNA small subunit methyltransferase G from Rickettsia akari (strain Hartford).